A 598-amino-acid chain; its full sequence is Elongation factor 4 (598 aa).

Residues 2 to 184 enclose the tr-type G domain; the sequence is NNIRNFAIIA…AIVAKLPAPQ (183 aa). Residues 14–19 and 131–134 contribute to the GTP site; these read DHGKST and NKVD.

It belongs to the TRAFAC class translation factor GTPase superfamily. Classic translation factor GTPase family. LepA subfamily.

The protein localises to the cell membrane. It carries out the reaction GTP + H2O = GDP + phosphate + H(+). In terms of biological role, required for accurate and efficient protein synthesis under certain stress conditions. May act as a fidelity factor of the translation reaction, by catalyzing a one-codon backward translocation of tRNAs on improperly translocated ribosomes. Back-translocation proceeds from a post-translocation (POST) complex to a pre-translocation (PRE) complex, thus giving elongation factor G a second chance to translocate the tRNAs correctly. Binds to ribosomes in a GTP-dependent manner. In Wolbachia sp. subsp. Drosophila simulans (strain wRi), this protein is Elongation factor 4.